A 198-amino-acid polypeptide reads, in one-letter code: Segregation and condensation protein B (198 aa).

Belongs to the ScpB family. As to quaternary structure, homodimer. Homodimerization may be required to stabilize the binding of ScpA to the Smc head domains. Component of a cohesin-like complex composed of ScpA, ScpB and the Smc homodimer, in which ScpA and ScpB bind to the head domain of Smc. The presence of the three proteins is required for the association of the complex with DNA.

It localises to the cytoplasm. Its function is as follows. Participates in chromosomal partition during cell division. May act via the formation of a condensin-like complex containing Smc and ScpA that pull DNA away from mid-cell into both cell halves. In Streptococcus mutans serotype c (strain ATCC 700610 / UA159), this protein is Segregation and condensation protein B.